We begin with the raw amino-acid sequence, 84 residues long: Metallothionein-like protein 2C (84 aa).

This sequence belongs to the metallothionein superfamily. Type 15 family.

Its subcellular location is the cytoplasm. It is found in the cytosol. Metallothioneins have a high content of cysteine residues that bind various heavy metals. Acts as a reactive oxygen species (ROS) scavenger in the cytosol. Possesses superoxide anion and hydroxyl radical scavenging activities in vitro. Plays a role during root development, lateral root initiation and seed embryo germination, possibly by regulating levels of cytokinin. The protein is Metallothionein-like protein 2C (MT2C) of Oryza sativa subsp. indica (Rice).